We begin with the raw amino-acid sequence, 28 residues long: M-poneritoxin-Dq4b/U1-poneritoxin-Dq4c/U1-poneritoxin-Dq4d (28 aa).

Met-20 carries the methionine sulfoxide; in form U1-PONTX-Dq4d modification. Ala-28 bears the Alanine amide; in form Dq-1362 and U1-PONTX-Dq4d mark.

In terms of processing, occurs in 3 forms, M-PONTX-Dq4b has an amidated Ala-28, U1-PONTX-Dq4d has an amidated Ala-28 and an oxidized Met-20, U1-PONTX-Dq4c has no modifications at either Met-20 or Ala-28. As to expression, expressed by the venom gland.

It localises to the secreted. Its function is as follows. M-poneritoxin-Dq4b: this synthetic peptide has antimicrobial activity against Gram-positive bacteria B.amyloliquefacies S499 (MIC=0.1 mM), L.monocytogenes 2231 and S.aureus ATCC 29213, against Gram-negative bacteria P.putida BTP1, P.aeruginosa PaO1 and E.coli ATCC 10536, and against the fungi S.cerevisiae, R.mucilaginosa and C.cucumerinum. Not active against the fungi F.oxysporum and B.cinerea. The chain is M-poneritoxin-Dq4b/U1-poneritoxin-Dq4c/U1-poneritoxin-Dq4d from Dinoponera quadriceps (South American ant).